The primary structure comprises 316 residues: UDP-3-O-acylglucosamine N-acyltransferase 2 (316 aa).

Catalysis depends on histidine 230, which acts as the Proton acceptor.

Belongs to the transferase hexapeptide repeat family. LpxD subfamily. Homotrimer.

The enzyme catalyses a UDP-3-O-[(3R)-3-hydroxyacyl]-alpha-D-glucosamine + a (3R)-hydroxyacyl-[ACP] = a UDP-2-N,3-O-bis[(3R)-3-hydroxyacyl]-alpha-D-glucosamine + holo-[ACP] + H(+). The protein operates within bacterial outer membrane biogenesis; LPS lipid A biosynthesis. Functionally, catalyzes the N-acylation of UDP-3-O-acylglucosamine using 3-hydroxyacyl-ACP as the acyl donor. Is involved in the biosynthesis of lipid A, a phosphorylated glycolipid that anchors the lipopolysaccharide to the outer membrane of the cell. This chain is UDP-3-O-acylglucosamine N-acyltransferase 2, found in Sulfurimonas denitrificans (strain ATCC 33889 / DSM 1251) (Thiomicrospira denitrificans (strain ATCC 33889 / DSM 1251)).